The sequence spans 209 residues: ATP-dependent Clp protease proteolytic subunit (209 aa).

The Nucleophile role is filled by Ser106. His131 is an active-site residue.

This sequence belongs to the peptidase S14 family. Fourteen ClpP subunits assemble into 2 heptameric rings which stack back to back to give a disk-like structure with a central cavity, resembling the structure of eukaryotic proteasomes.

The protein resides in the cytoplasm. The enzyme catalyses Hydrolysis of proteins to small peptides in the presence of ATP and magnesium. alpha-casein is the usual test substrate. In the absence of ATP, only oligopeptides shorter than five residues are hydrolyzed (such as succinyl-Leu-Tyr-|-NHMec, and Leu-Tyr-Leu-|-Tyr-Trp, in which cleavage of the -Tyr-|-Leu- and -Tyr-|-Trp bonds also occurs).. Its function is as follows. Cleaves peptides in various proteins in a process that requires ATP hydrolysis. Has a chymotrypsin-like activity. Plays a major role in the degradation of misfolded proteins. This chain is ATP-dependent Clp protease proteolytic subunit, found in Brucella canis (strain ATCC 23365 / NCTC 10854 / RM-666).